A 155-amino-acid chain; its full sequence is Ribosomal RNA large subunit methyltransferase H (155 aa).

S-adenosyl-L-methionine is bound by residues L72, G103, and 122-127 (LGRMVW).

It belongs to the RNA methyltransferase RlmH family. Homodimer.

It is found in the cytoplasm. It catalyses the reaction pseudouridine(1915) in 23S rRNA + S-adenosyl-L-methionine = N(3)-methylpseudouridine(1915) in 23S rRNA + S-adenosyl-L-homocysteine + H(+). In terms of biological role, specifically methylates the pseudouridine at position 1915 (m3Psi1915) in 23S rRNA. This is Ribosomal RNA large subunit methyltransferase H from Cereibacter sphaeroides (strain KD131 / KCTC 12085) (Rhodobacter sphaeroides).